The chain runs to 314 residues: uncharacterized protein (314 aa).

Positions 1–18 are cleaved as a signal peptide; it reads MKVSLLIFLIILVGVIKS. N-linked (GlcNAc...) asparagine glycosylation is found at asparagine 43, asparagine 96, asparagine 109, asparagine 116, asparagine 117, and asparagine 161. Residues 252–314 are disordered; the sequence is SMRITKNNPH…PKSIDFHHLF (63 aa). Composition is skewed to low complexity over residues 257-268 and 285-296; these read KNNPHLNNNNNN and KTTTKTSTKTTS.

Its subcellular location is the secreted. This is an uncharacterized protein from Dictyostelium discoideum (Social amoeba).